Reading from the N-terminus, the 452-residue chain is Phosphoglucosamine mutase (452 aa).

Catalysis depends on Ser-104, which acts as the Phosphoserine intermediate. 4 residues coordinate Mg(2+): Ser-104, Asp-244, Asp-246, and Asp-248. Ser-104 is subject to Phosphoserine.

It belongs to the phosphohexose mutase family. Requires Mg(2+) as cofactor. Post-translationally, activated by phosphorylation.

It catalyses the reaction alpha-D-glucosamine 1-phosphate = D-glucosamine 6-phosphate. Functionally, catalyzes the conversion of glucosamine-6-phosphate to glucosamine-1-phosphate. The polypeptide is Phosphoglucosamine mutase (Pediococcus pentosaceus (strain ATCC 25745 / CCUG 21536 / LMG 10740 / 183-1w)).